Here is a 198-residue protein sequence, read N- to C-terminus: Inner membrane-spanning protein YciB (198 aa).

The next 5 membrane-spanning stretches (helical) occupy residues 36–56 (IYSA…AIFI), 67–87 (LTLV…SETF), 90–110 (WKAP…HFIG), 135–155 (VAWI…AFTF), and 162–182 (FKVF…GIYL).

It belongs to the YciB family.

It is found in the cell inner membrane. Its function is as follows. Plays a role in cell envelope biogenesis, maintenance of cell envelope integrity and membrane homeostasis. This is Inner membrane-spanning protein YciB from Pseudomonas fluorescens (strain SBW25).